The following is a 430-amino-acid chain: Tol-Pal system protein TolB (430 aa).

The first 21 residues, 1 to 21 (MKQALRVAFGFLILWASVLHA), serve as a signal peptide directing secretion.

This sequence belongs to the TolB family. The Tol-Pal system is composed of five core proteins: the inner membrane proteins TolA, TolQ and TolR, the periplasmic protein TolB and the outer membrane protein Pal. They form a network linking the inner and outer membranes and the peptidoglycan layer.

Its subcellular location is the periplasm. In terms of biological role, part of the Tol-Pal system, which plays a role in outer membrane invagination during cell division and is important for maintaining outer membrane integrity. TolB occupies a key intermediary position in the Tol-Pal system because it communicates directly with both membrane-embedded components, Pal in the outer membrane and TolA in the inner membrane. This chain is Tol-Pal system protein TolB, found in Shigella flexneri serotype 5b (strain 8401).